The following is a 328-amino-acid chain: Tetraacyldisaccharide 4'-kinase (328 aa).

59–66 (TAGGNGKT) serves as a coordination point for ATP.

This sequence belongs to the LpxK family.

It carries out the reaction a lipid A disaccharide + ATP = a lipid IVA + ADP + H(+). It participates in glycolipid biosynthesis; lipid IV(A) biosynthesis; lipid IV(A) from (3R)-3-hydroxytetradecanoyl-[acyl-carrier-protein] and UDP-N-acetyl-alpha-D-glucosamine: step 6/6. Transfers the gamma-phosphate of ATP to the 4'-position of a tetraacyldisaccharide 1-phosphate intermediate (termed DS-1-P) to form tetraacyldisaccharide 1,4'-bis-phosphate (lipid IVA). The sequence is that of Tetraacyldisaccharide 4'-kinase from Aliivibrio fischeri (strain ATCC 700601 / ES114) (Vibrio fischeri).